Here is a 226-residue protein sequence, read N- to C-terminus: Large ribosomal subunit protein uL1 (226 aa).

It belongs to the universal ribosomal protein uL1 family. In terms of assembly, part of the 50S ribosomal subunit.

Its function is as follows. Binds directly to 23S rRNA. The L1 stalk is quite mobile in the ribosome, and is involved in E site tRNA release. Functionally, protein L1 is also a translational repressor protein, it controls the translation of the L11 operon by binding to its mRNA. In Selenomonas ruminantium, this protein is Large ribosomal subunit protein uL1.